Here is an 87-residue protein sequence, read N- to C-terminus: Small ribosomal subunit protein bS20 (87 aa).

The tract at residues 1 to 20 (MANHKSAEKRARQTIKRTER) is disordered.

Belongs to the bacterial ribosomal protein bS20 family.

Binds directly to 16S ribosomal RNA. The protein is Small ribosomal subunit protein bS20 of Campylobacter lari (strain RM2100 / D67 / ATCC BAA-1060).